Consider the following 247-residue polypeptide: 5-oxoprolinase subunit A (247 aa).

This sequence belongs to the LamB/PxpA family. In terms of assembly, forms a complex composed of PxpA, PxpB and PxpC.

It carries out the reaction 5-oxo-L-proline + ATP + 2 H2O = L-glutamate + ADP + phosphate + H(+). Its function is as follows. Catalyzes the cleavage of 5-oxoproline to form L-glutamate coupled to the hydrolysis of ATP to ADP and inorganic phosphate. This chain is 5-oxoprolinase subunit A, found in Vibrio vulnificus (strain CMCP6).